The sequence spans 673 residues: DNA ligase (673 aa).

NAD(+)-binding positions include 35–39, 84–85, and E115; these read DADYD and SL. K117 acts as the N6-AMP-lysine intermediate in catalysis. NAD(+) contacts are provided by R138, E180, K296, and K320. Residues C415, C418, C433, and C438 each contribute to the Zn(2+) site. Positions 595-673 constitute a BRCT domain; sequence ERGTALAGQT…EDALKKLLGK (79 aa).

The protein belongs to the NAD-dependent DNA ligase family. LigA subfamily. Requires Mg(2+) as cofactor. The cofactor is Mn(2+).

The enzyme catalyses NAD(+) + (deoxyribonucleotide)n-3'-hydroxyl + 5'-phospho-(deoxyribonucleotide)m = (deoxyribonucleotide)n+m + AMP + beta-nicotinamide D-nucleotide.. Functionally, DNA ligase that catalyzes the formation of phosphodiester linkages between 5'-phosphoryl and 3'-hydroxyl groups in double-stranded DNA using NAD as a coenzyme and as the energy source for the reaction. It is essential for DNA replication and repair of damaged DNA. The protein is DNA ligase of Koribacter versatilis (strain Ellin345).